The following is a 349-amino-acid chain: Acyl-CoA:acyl-CoA alkyltransferase (349 aa).

Catalysis depends on Glu97, which acts as the Proton acceptor. Residue Cys123 is the Acyl-thioester intermediate of the active site.

The protein belongs to the thiolase-like superfamily. OleA family.

It carries out the reaction a 1,2-saturated acyl-CoA + an acyl-CoA + H2O = an (R)-2-alkyl-3-oxoalkanoate + 2 CoA + H(+). Functionally, involved in olefin biosynthesis. Catalyzes a non-decarboxylative head-to-head Claisen condensation of two acyl-CoA molecules, generating an (R)-2-alkyl-3-oxoalkanoate. The S.oneidensis oleABCD genes produce 3,6,9,12,15,19,22,25,28-hentriacontanonaene, which may aid the cells in adapting to a sudden drop in temperature. The sequence is that of Acyl-CoA:acyl-CoA alkyltransferase from Shewanella oneidensis (strain ATCC 700550 / JCM 31522 / CIP 106686 / LMG 19005 / NCIMB 14063 / MR-1).